The following is a 142-amino-acid chain: Hemoglobin subunit alpha (142 aa).

The region spanning V2 to R142 is the Globin domain. S4 is modified (phosphoserine). K8 is subject to N6-succinyllysine. A Phosphothreonine modification is found at T9. The residue at position 12 (K12) is an N6-succinyllysine. The residue at position 17 (K17) is an N6-acetyllysine; alternate. K17 is subject to N6-succinyllysine; alternate. Y25 carries the phosphotyrosine modification. Residue S36 is modified to Phosphoserine. An N6-succinyllysine modification is found at K41. S50 is modified (phosphoserine). Q59 is an O2 binding site. Residue H88 participates in heme b binding. T109 bears the Phosphothreonine mark. Residue S125 is modified to Phosphoserine. A phosphothreonine mark is found at T135 and T138. S139 carries the post-translational modification Phosphoserine.

The protein belongs to the globin family. In terms of assembly, heterotetramer of two alpha chains and two beta chains. In terms of tissue distribution, red blood cells.

Functionally, involved in oxygen transport from the lung to the various peripheral tissues. Its function is as follows. Hemopressin acts as an antagonist peptide of the cannabinoid receptor CNR1. Hemopressin-binding efficiently blocks cannabinoid receptor CNR1 and subsequent signaling. The chain is Hemoglobin subunit alpha (HBA) from Monodelphis domestica (Gray short-tailed opossum).